Reading from the N-terminus, the 83-residue chain is FMRFamide-like neuropeptide 23 (83 aa).

Positions 1 to 24 (MLLPKISILLYILVVLQETAAVRG) are cleaved as a signal peptide. A propeptide spanning residues 25-36 (ALFRSGRAVPFE) is cleaved from the precursor. Phenylalanine 47 carries the post-translational modification Phenylalanine amide. The propeptide occupies 50–83 (AGMASGVGGGSEGGPDDVKNSYIRVNGEPEIVYQ).

Belongs to the FARP (FMRFamide related peptide) family. In terms of tissue distribution, each flp gene is expressed in a distinct set of neurons.

The protein resides in the secreted. Its function is as follows. FMRFamides and FMRFamide-like peptides are neuropeptides. The protein is FMRFamide-like neuropeptide 23 (flp-23) of Caenorhabditis elegans.